Reading from the N-terminus, the 242-residue chain is Probable transcriptional regulatory protein HEAR0561 (242 aa).

This sequence belongs to the TACO1 family.

Its subcellular location is the cytoplasm. In Herminiimonas arsenicoxydans, this protein is Probable transcriptional regulatory protein HEAR0561.